A 381-amino-acid chain; its full sequence is Mannitol-1-phosphate 5-dehydrogenase (381 aa).

3–14 provides a ligand contact to NAD(+); it reads AVHFGAGNIGRG.

The protein belongs to the mannitol dehydrogenase family.

It carries out the reaction D-mannitol 1-phosphate + NAD(+) = beta-D-fructose 6-phosphate + NADH + H(+). In Photobacterium profundum (strain SS9), this protein is Mannitol-1-phosphate 5-dehydrogenase.